The primary structure comprises 433 residues: Serendipity locus protein delta (433 aa).

The ZAD domain maps to 1–90; the sequence is MDTCFFCGAV…TQKRLTTQLK (90 aa). Positions 4, 7, 61, and 64 each coordinate Zn(2+). The segment at 141-162 is disordered; it reads DTEIKREFVDEEEEEDDDDDDE. The segment covering 149–162 has biased composition (acidic residues); that stretch reads VDEEEEEDDDDDDE. The short motif at 187–193 is the Nuclear localization signal element; it reads PTKKRVK. 7 consecutive C2H2-type zinc fingers follow at residues 194–217, 223–245, 251–273, 279–301, 308–330, 337–359, and 405–428; these read QECTTCGKVYNSWYQLQKHISEEH, HICPICGVIRRDEEYLELHMNLH, KQCRYCPKSFSRPVNTLRHMRMH, YQCEKCGLRFSQDNLLYNHRLRH, IICSICNVSFKSRKTFNHHTLIH, HYCSVCPKSFTERYTLKMHMKTH, and GFCLICNTNFENKKELEHHLQFDH.

As to quaternary structure, homodimer (via ZAD domain) in solution. Binds DNA as a homodimer. N-terminal regions of the protein are required, in addition to the zinc fingers, for the specificity of chromatin-binding. As to expression, predominantly localized to the sub- and supraesophagal ganglia and the ventral nerve cord in the embryo, after dorsal closure.

The protein localises to the nucleus. Its function is as follows. Transcriptional activator that controls bicoid gene expression during oogenesis. Found in transcriptionally active cells. Binds to specific sites on polytene chromosomes of third instar larvae. Binds to the consensus DNA sequence 5'-YTAGAGATGGRAA-3'. This Drosophila melanogaster (Fruit fly) protein is Serendipity locus protein delta (Sry-delta).